Reading from the N-terminus, the 189-residue chain is MADEQNLDNQNPETPEQSQADVAEDLAARVQSLEEQLAAAQDQSLRVAAELQNIRRRAEQDVEKAHKFALEKFAGDLLAVADSLERGLELSNPDDEAVKPMREGVELTLKLLLDTLARHQLEQLDPHGEPFNPEHHQAMAMEESTHVEPGSVLKVFQKGYLLNGRLLRPAMVVVSKAPADAPPSIDEKA.

A disordered region spans residues M1–D21. The segment covering L7 to A20 has biased composition (polar residues).

It belongs to the GrpE family. As to quaternary structure, homodimer.

The protein resides in the cytoplasm. Its function is as follows. Participates actively in the response to hyperosmotic and heat shock by preventing the aggregation of stress-denatured proteins, in association with DnaK and GrpE. It is the nucleotide exchange factor for DnaK and may function as a thermosensor. Unfolded proteins bind initially to DnaJ; upon interaction with the DnaJ-bound protein, DnaK hydrolyzes its bound ATP, resulting in the formation of a stable complex. GrpE releases ADP from DnaK; ATP binding to DnaK triggers the release of the substrate protein, thus completing the reaction cycle. Several rounds of ATP-dependent interactions between DnaJ, DnaK and GrpE are required for fully efficient folding. The polypeptide is Protein GrpE (Stutzerimonas stutzeri (strain A1501) (Pseudomonas stutzeri)).